We begin with the raw amino-acid sequence, 316 residues long: Lipooligosaccharide heptosyltransferase 2 (316 aa).

This sequence belongs to the glycosyltransferase 9 family.

The catalysed reaction is an L-alpha-D-Hep-(1-&gt;5)-[alpha-Kdo-(2-&gt;4)]-alpha-Kdo-(2-&gt;6)-lipid A + ADP-L-glycero-beta-D-manno-heptose = an L-alpha-D-Hep-(1-&gt;3)-L-alpha-D-Hep-(1-&gt;5)-[alpha-Kdo-(2-&gt;4)]-alpha-Kdo-(2-&gt;6)-lipid A + ADP + H(+). It participates in bacterial outer membrane biogenesis; LOS core biosynthesis. In terms of biological role, glycosyltransferase involved in the biosynthesis of the core oligosaccharide region of lipooligosaccharide (LOS). Catalyzes the addition of the second heptose unit to the heptosyl-Kdo2-lipid A module. This chain is Lipooligosaccharide heptosyltransferase 2, found in Campylobacter jejuni subsp. jejuni serotype O:6 (strain 81116 / NCTC 11828).